Reading from the N-terminus, the 80-residue chain is RNA-binding protein Hfq (80 aa).

The Sm domain maps to 9–68; it reads EPFLNALRKERIPVSIYLVNGIKLQGQIDSFDQFVVLLKNTVSQMVYKHAISTIVPSRPV.

Belongs to the Hfq family. Homohexamer.

RNA chaperone that binds small regulatory RNA (sRNAs) and mRNAs to facilitate mRNA translational regulation in response to envelope stress, environmental stress and changes in metabolite concentrations. Also binds with high specificity to tRNAs. This Thioalkalivibrio sulfidiphilus (strain HL-EbGR7) protein is RNA-binding protein Hfq.